Consider the following 101-residue polypeptide: MIPGEIITLEGDIELNQGQPTVTMRVANTGDRPIQVGSHFHFYEVNAALSFDREKARGQRLDIAAGTAVRFEPGQERDVTLVPIRGHREIYGFRQMIMGKL.

The protein belongs to the urease beta subunit family. Heterotrimer of UreA (gamma), UreB (beta) and UreC (alpha) subunits. Three heterotrimers associate to form the active enzyme.

Its subcellular location is the cytoplasm. It catalyses the reaction urea + 2 H2O + H(+) = hydrogencarbonate + 2 NH4(+). It functions in the pathway nitrogen metabolism; urea degradation; CO(2) and NH(3) from urea (urease route): step 1/1. Its function is as follows. Disruption of the ure1 gene cluster suggests that it protects brucellae during their passage through the stomach. The major route of infection in human brucellosis is oral. This is Urease subunit beta 1 from Brucella abortus (strain 2308).